We begin with the raw amino-acid sequence, 478 residues long: NADH-quinone oxidoreductase subunit N (478 aa).

The next 14 helical transmembrane spans lie at 5 to 25, 37 to 57, 68 to 88, 99 to 119, 121 to 141, 156 to 176, 199 to 219, 231 to 251, 268 to 288, 293 to 313, 320 to 340, 365 to 385, 401 to 421, and 446 to 466; these read LASP…VGVA, MLTL…ALGL, FAVM…VLSL, FEFP…VSAS, FMTL…LAAF, FVLG…IYGF, LTVG…AAPF, PTPV…AMML, VVAL…IGQT, LMAY…AAGS, LLIY…CILA, ALLL…SGFF, LLWG…YYYL, and VVAV…APIL.

The protein belongs to the complex I subunit 2 family. In terms of assembly, NDH-1 is composed of 14 different subunits. Subunits NuoA, H, J, K, L, M, N constitute the membrane sector of the complex.

It is found in the cell inner membrane. The enzyme catalyses a quinone + NADH + 5 H(+)(in) = a quinol + NAD(+) + 4 H(+)(out). Its function is as follows. NDH-1 shuttles electrons from NADH, via FMN and iron-sulfur (Fe-S) centers, to quinones in the respiratory chain. The immediate electron acceptor for the enzyme in this species is believed to be ubiquinone. Couples the redox reaction to proton translocation (for every two electrons transferred, four hydrogen ions are translocated across the cytoplasmic membrane), and thus conserves the redox energy in a proton gradient. In Granulibacter bethesdensis (strain ATCC BAA-1260 / CGDNIH1), this protein is NADH-quinone oxidoreductase subunit N.